Consider the following 372-residue polypeptide: Serine protease 44 (372 aa).

Positions 1–25 (MAFQGCDCFGLLVWLLLLQTRLGKA) are cleaved as a signal peptide. The Extracellular segment spans residues 26–351 (RMVPGTPSLS…KELSRASCWK (326 aa)). A disordered region spans residues 31-72 (TPSLSPLPSENGLDDSGVNPQERPLTGMPETSLPRKPGDSTR). Positions 112–345 (IVGGRPAPAR…YRDWIIKELS (234 aa)) constitute a Peptidase S1 domain. The cysteines at positions 137 and 153 are disulfide-linked. Catalysis depends on charge relay system residues H152 and D197. An N-linked (GlcNAc...) asparagine glycan is attached at N208. Intrachain disulfides connect C231–C303, C262–C283, and C293–C321. S297 serves as the catalytic Charge relay system. A helical membrane pass occupies residues 352-372 (LSGFLVLSVCLVLHLAIVVAL).

Belongs to the peptidase S1 family. As to expression, testis-specific. Expressed by primary and secondary spermatocytes.

It is found in the membrane. The protein localises to the cytoplasm. Its function is as follows. Lacks protease activity in vitro. The sequence is that of Serine protease 44 from Mus musculus (Mouse).